The primary structure comprises 183 residues: Ras-related protein Rap-2c (183 aa).

10 to 17 (GSGGVGKS) serves as a coordination point for GTP. An Effector region motif is present at residues 32 to 40 (YDPTIEDFY). Residues 57–61 (DTAGT) and 116–119 (NKVD) contribute to the GTP site. Residues Cys176 and Cys177 are each lipidated (S-palmitoyl cysteine). The residue at position 180 (Cys180) is a Cysteine methyl ester. Residue Cys180 is the site of S-geranylgeranyl cysteine attachment. Positions 181 to 183 (VVQ) are cleaved as a propeptide — removed in mature form.

This sequence belongs to the small GTPase superfamily. Ras family. Palmitoylated. Palmitoylation is required for association with recycling endosome membranes and activation of TNIK.

The protein localises to the cytoplasm. The protein resides in the recycling endosome membrane. The catalysed reaction is GTP + H2O = GDP + phosphate + H(+). Functionally, small GTP-binding protein which cycles between a GDP-bound inactive and a GTP-bound active form. May play a role in cytoskeletal rearrangements and regulate cell spreading through activation of the effector TNIK. May play a role in SRE-mediated gene transcription. The sequence is that of Ras-related protein Rap-2c (RAP2C) from Bos taurus (Bovine).